The following is a 201-amino-acid chain: IMP cyclohydrolase (201 aa).

Belongs to the archaeal IMP cyclohydrolase family.

The enzyme catalyses IMP + H2O = 5-formamido-1-(5-phospho-D-ribosyl)imidazole-4-carboxamide. Its pathway is purine metabolism; IMP biosynthesis via de novo pathway; IMP from 5-formamido-1-(5-phospho-D-ribosyl)imidazole-4-carboxamide: step 1/1. Functionally, catalyzes the cyclization of 5-formylamidoimidazole-4-carboxamide ribonucleotide to IMP. The chain is IMP cyclohydrolase from Methanococcus maripaludis (strain C6 / ATCC BAA-1332).